The chain runs to 262 residues: MNSSFSAPAKKSLGQHFLADRYYIDRIVQAVDPRAGQHLVEIGPGQGAITFPLLRRHGALTVIEFDRDLIAPLTEVAAPIGALSIIHRDVLSVDFTALANGTPIRLVGNLPYNISSPILFHALDHAAAVADMHFMLQKEVVDRMAAGPGSKVYGRLSVMLQAYCEVTALFVVPPGAFRPPPKVDSAVVRLVPRDPATVQINDRRRFADVVRAGFGQRRKTLRNALSTICEPAHFDAAQVRPDARAEQLEVADFIRLANVELA.

Positions 16, 18, 43, 64, 89, and 109 each coordinate S-adenosyl-L-methionine.

This sequence belongs to the class I-like SAM-binding methyltransferase superfamily. rRNA adenine N(6)-methyltransferase family. RsmA subfamily.

The protein resides in the cytoplasm. It carries out the reaction adenosine(1518)/adenosine(1519) in 16S rRNA + 4 S-adenosyl-L-methionine = N(6)-dimethyladenosine(1518)/N(6)-dimethyladenosine(1519) in 16S rRNA + 4 S-adenosyl-L-homocysteine + 4 H(+). Functionally, specifically dimethylates two adjacent adenosines (A1518 and A1519) in the loop of a conserved hairpin near the 3'-end of 16S rRNA in the 30S particle. May play a critical role in biogenesis of 30S subunits. This is Ribosomal RNA small subunit methyltransferase A from Xanthomonas euvesicatoria pv. vesicatoria (strain 85-10) (Xanthomonas campestris pv. vesicatoria).